The sequence spans 697 residues: DNA ligase (697 aa).

Residues 34 to 38 (DKTYD), 83 to 84 (SL), and Glu114 each bind NAD(+). Lys116 (N6-AMP-lysine intermediate) is an active-site residue. Arg137, Glu171, Lys315, and Lys339 together coordinate NAD(+). The Zn(2+) site is built by Cys430, Cys433, Cys448, and Cys453. One can recognise a BRCT domain in the interval 616–697 (KKSSKLNNLN…FHNLLKEENA (82 aa)).

Belongs to the NAD-dependent DNA ligase family. LigA subfamily. Mg(2+) is required as a cofactor. Requires Mn(2+) as cofactor.

It carries out the reaction NAD(+) + (deoxyribonucleotide)n-3'-hydroxyl + 5'-phospho-(deoxyribonucleotide)m = (deoxyribonucleotide)n+m + AMP + beta-nicotinamide D-nucleotide.. Its function is as follows. DNA ligase that catalyzes the formation of phosphodiester linkages between 5'-phosphoryl and 3'-hydroxyl groups in double-stranded DNA using NAD as a coenzyme and as the energy source for the reaction. It is essential for DNA replication and repair of damaged DNA. The chain is DNA ligase from Mycoplasmopsis synoviae (strain 53) (Mycoplasma synoviae).